A 959-amino-acid polypeptide reads, in one-letter code: Protovillin (959 aa).

The tract at residues 1-53 (MEPPLELPTQRKRVIPSKFGILKRNAEIEAEKNRENLQQSSCFSHINEIGKEI) is tail. Positions 54–832 (GLEIWKIIDD…PIMLPTSGVT (779 aa)) are core. 6 Gelsolin-like repeats span residues 64-116 (STIQ…SQET), 204-244 (IRVK…LEKG), 309-366 (IKLY…DQRT), 479-529 (RNKF…EDKG), 603-647 (INIH…KEAA), and 713-754 (FKVF…TEKL). Repeat copies occupy residues 840–849 (TPKPITTPTV) and 851–860 (TPKPITTPTV). Positions 840 to 860 (TPKPITTPTVTTPKPITTPTV) are 2 X 10 AA repeats of T-P-K-P-I-T-T-P-T-V. Residues 895-959 (TTITTFYPLS…KQLRVDNGLF (65 aa)) enclose the HP domain.

Belongs to the villin/gelsolin family.

The protein resides in the cytoplasm. It localises to the cytoskeleton. Functionally, caps actin filaments but displays neither severing nor cross-linking nor nucleating activities. Protovillin seems to be a villin precursor with only archaic capping activity. It lacks essential changes in the sequence to allow bundling of actin filaments and consequently the appearance of microvilli. The sequence is that of Protovillin (vilB) from Dictyostelium discoideum (Social amoeba).